Here is an 875-residue protein sequence, read N- to C-terminus: GATOR2 complex protein MIOS (875 aa).

WD repeat units follow at residues 61-100 (PYMKCVACYLNYDPECLLAVGQANGRVVLTSLGQDHNSKF), 111-155 (KHAR…TPDI), 182-221 (GQNDACLSLCWLPRDQKLLLAGMHRNLAIFDLRNTSQKMF), 223-261 (NTKAVQGVTVDPYFHDRVASFYEGQVAIWDLRKFEKPVL), 265-306 (EQPK…TPIG), and 395-437 (RLRA…KQYT). A C4-type zinc finger spans residues 735-781 (VSCNFCGKSISYSCSAVPHQGRGFSQYGVSGSPTKSKVTSCPGCRKP). Residues Cys737 and Cys740 each contribute to the Zn(2+) site. 2 positions are modified to phosphoserine: Ser759 and Ser766. Zn(2+) contacts are provided by Cys775, Cys778, Cys788, Cys827, Cys830, His832, His835, His838, Cys849, Cys854, and Cys858. The RING-type; atypical zinc finger occupies 782–863 (LPRCALCLIN…CTCKCMQLDT (82 aa)).

Belongs to the WD repeat mio family. In terms of assembly, component of the GATOR2 subcomplex, composed of MIOS, SEC13, SEH1L, WDR24 and WDR59. The GATOR2 complex interacts with CASTOR1 and CASTOR2; the interaction is negatively regulated by arginine. CASTOR1 and CASTOR2 convey leucine availability via direct interaction with MIOS. The GATOR2 complex interacts with SESN1, SESN2 and SESN3; the interaction is negatively regulated by amino acids. Interacts with SAR1A and SAR1B; the interaction is direct, disrupted by leucine and mediates the interaction of SAR1A or SAR1B with the GATOR2 complex to negatively regulate the TORC1 signaling upon leucine deprivation.

The protein resides in the lysosome membrane. With respect to regulation, the GATOR2 complex is negatively regulated by the upstream amino acid sensors CASTOR1 and SESN2, which sequester the GATOR2 complex in absence of amino acids. In the presence of abundant amino acids, GATOR2 is released from CASTOR1 and SESN2 and activated. Its function is as follows. As a component of the GATOR2 complex, functions as an activator of the amino acid-sensing branch of the mTORC1 signaling pathway. The GATOR2 complex indirectly activates mTORC1 through the inhibition of the GATOR1 subcomplex. GATOR2 probably acts as an E3 ubiquitin-protein ligase toward GATOR1. In the presence of abundant amino acids, the GATOR2 complex mediates ubiquitination of the NPRL2 core component of the GATOR1 complex, leading to GATOR1 inactivation. In the absence of amino acids, GATOR2 is inhibited, activating the GATOR1 complex. Within the GATOR2 complex, MIOS is required to prevent autoubiquitination of WDR24, the catalytic subunit of the complex. The GATOR2 complex is required for brain myelination. The sequence is that of GATOR2 complex protein MIOS from Pongo abelii (Sumatran orangutan).